We begin with the raw amino-acid sequence, 636 residues long: uncharacterized protein (636 aa).

The segment at residues 10 to 36 is a DNA-binding region (zn(2)-C6 fungal-type); it reads CLACRRKKVKCNRQYPCTRCLKYGEAC. Over residues 556–580 the composition is skewed to polar residues; sequence NSQSTSEFVSPISDTENGSSSQQVS. The interval 556 to 581 is disordered; the sequence is NSQSTSEFVSPISDTENGSSSQQVSE.

The protein localises to the cytoplasm. It is found in the nucleus. This is an uncharacterized protein from Schizosaccharomyces pombe (strain 972 / ATCC 24843) (Fission yeast).